Here is a 182-residue protein sequence, read N- to C-terminus: Dual-action ribosomal maturation protein DarP (182 aa).

The protein belongs to the DarP family.

The protein resides in the cytoplasm. In terms of biological role, member of a network of 50S ribosomal subunit biogenesis factors which assembles along the 30S-50S interface, preventing incorrect 23S rRNA structures from forming. Promotes peptidyl transferase center (PTC) maturation. The polypeptide is Dual-action ribosomal maturation protein DarP (Yersinia pseudotuberculosis serotype O:1b (strain IP 31758)).